A 167-amino-acid polypeptide reads, in one-letter code: uncharacterized protein (167 aa).

The disordered stretch occupies residues 148-167 (NKESRGENDGGEERESANIY).

This is an uncharacterized protein from Homo sapiens (Human).